We begin with the raw amino-acid sequence, 353 residues long: Inactive ADP-ribosyltransferase ARH2 (353 aa).

Ser-27 carries the phosphoserine modification.

It belongs to the ADP-ribosylglycohydrolase family. As to expression, expressed in the embryonic heart at E11.5.

The protein localises to the cytoplasm. Its subcellular location is the myofibril. It localises to the sarcomere. Functionally, required for myofibril assembly and outgrowth of the cardiac chambers in the developing heart. Appears to be catalytically inactive, showing no activity against O-acetyl-ADP-ribose. This chain is Inactive ADP-ribosyltransferase ARH2 (Adprhl1), found in Mus musculus (Mouse).